The primary structure comprises 85 residues: Small ribosomal subunit protein bS20 (85 aa).

The disordered stretch occupies residues Met1–Ala22.

It belongs to the bacterial ribosomal protein bS20 family.

In terms of biological role, binds directly to 16S ribosomal RNA. This is Small ribosomal subunit protein bS20 from Bacillus cytotoxicus (strain DSM 22905 / CIP 110041 / 391-98 / NVH 391-98).